We begin with the raw amino-acid sequence, 129 residues long: MAKKTVAAKKRNVKVDANGQLHVHSSFNNIIVSLANSEGQIISWSSAGKMGFRGSKKNTPYAAQMAAQDCAKVAFDLGLRKVKAYVKGPGNGRESAIRTVHGAGIEVTEIIDVTPLPHNGCRPPKRRRV.

This sequence belongs to the universal ribosomal protein uS11 family. In terms of assembly, part of the 30S ribosomal subunit. Interacts with proteins S7 and S18. Binds to IF-3.

Its function is as follows. Located on the platform of the 30S subunit, it bridges several disparate RNA helices of the 16S rRNA. Forms part of the Shine-Dalgarno cleft in the 70S ribosome. This Phocaeicola vulgatus (strain ATCC 8482 / DSM 1447 / JCM 5826 / CCUG 4940 / NBRC 14291 / NCTC 11154) (Bacteroides vulgatus) protein is Small ribosomal subunit protein uS11.